Reading from the N-terminus, the 355-residue chain is Peptide chain release factor 1 (355 aa).

Gln231 is modified (N5-methylglutamine). Over residues 281-291 (ERLAKESEARK) the composition is skewed to basic and acidic residues. A disordered region spans residues 281 to 302 (ERLAKESEARKSQVGSGDRSER).

Belongs to the prokaryotic/mitochondrial release factor family. Post-translationally, methylated by PrmC. Methylation increases the termination efficiency of RF1.

The protein localises to the cytoplasm. Peptide chain release factor 1 directs the termination of translation in response to the peptide chain termination codons UAG and UAA. The polypeptide is Peptide chain release factor 1 (Campylobacter jejuni subsp. doylei (strain ATCC BAA-1458 / RM4099 / 269.97)).